The following is a 211-amino-acid chain: Metalloproteinase inhibitor 3 (211 aa).

Residues 1-23 (MTPWLGLVVLLSCWSLGHWGAEA) form the signal peptide. Cys24 contributes to the Zn(2+) binding site. Involved in metalloproteinase-binding regions lie at residues 24–27 (CTCS) and 88–89 (ES). 6 disulfide bridges follow: Cys24–Cys91, Cys26–Cys118, Cys36–Cys143, Cys145–Cys192, Cys150–Cys155, and Cys163–Cys184. The 120-residue stretch at 24-143 (CTCSPSHPQD…GLNYRYHLGC (120 aa)) folds into the NTR domain. The tract at residues 105-188 (TGRVYEGKMY…SKHYACIRQK (84 aa)) is mediates interaction with EFEMP1.

It belongs to the protease inhibitor I35 (TIMP) family. Interacts with EFEMP1. Interacts with KDR. Highest levels are found in kidney, lung and brain followed by ovary and uterus. Low levels are found in bone.

Its subcellular location is the secreted. It is found in the extracellular space. The protein resides in the extracellular matrix. In terms of biological role, mediates a variety of processes including matrix regulation and turnover, inflammation, and angiogenesis, through reversible inhibition of zinc protease superfamily enzymes, primarily matrix metalloproteinases (MMPs). Regulates extracellular matrix (ECM) remodeling through inhibition of matrix metalloproteinases (MMP) including MMP-1, MMP-2, MMP-3, MMP-7, MMP-9, MMP-13, MMP-14 and MMP-15. Additionally, modulates the processing of amyloid precursor protein (APP) and apolipoprotein E receptor ApoER2 by inhibiting two alpha-secretases ADAM10 and ADAM17. Functions as a tumor suppressor and a potent inhibitor of angiogenesis. Exerts its anti-angiogenic effect by directly interacting with vascular endothelial growth factor (VEGF) receptor-2/KDR, preventing its binding to the VEGFA ligand. Selectively induces apoptosis in angiogenic endothelial cells through a caspase-independent cell death pathway. Mechanistically, inhibits matrix-induced focal adhesion kinase PTK2 tyrosine phosphorylation and association with paxillin/PXN and disrupts the incorporation of ITGB3, PTK2 and PXN into focal adhesion contacts on the matrix. This Mus musculus (Mouse) protein is Metalloproteinase inhibitor 3 (Timp3).